The following is a 126-amino-acid chain: Large ribosomal subunit protein bL12 (126 aa).

It belongs to the bacterial ribosomal protein bL12 family. Homodimer. Part of the ribosomal stalk of the 50S ribosomal subunit. Forms a multimeric L10(L12)X complex, where L10 forms an elongated spine to which 2 to 4 L12 dimers bind in a sequential fashion. Binds GTP-bound translation factors.

Functionally, forms part of the ribosomal stalk which helps the ribosome interact with GTP-bound translation factors. Is thus essential for accurate translation. The protein is Large ribosomal subunit protein bL12 of Solibacter usitatus (strain Ellin6076).